We begin with the raw amino-acid sequence, 303 residues long: Probable porphobilinogen deaminase (303 aa).

Position 240 is an S-(dipyrrolylmethanemethyl)cysteine (C240).

The protein belongs to the HMBS family. Dipyrromethane serves as cofactor.

It catalyses the reaction 4 porphobilinogen + H2O = hydroxymethylbilane + 4 NH4(+). Its pathway is porphyrin-containing compound metabolism; protoporphyrin-IX biosynthesis; coproporphyrinogen-III from 5-aminolevulinate: step 2/4. Functionally, tetrapolymerization of the monopyrrole PBG into the hydroxymethylbilane pre-uroporphyrinogen in several discrete steps. This is Probable porphobilinogen deaminase from Hyperthermus butylicus (strain DSM 5456 / JCM 9403 / PLM1-5).